Reading from the N-terminus, the 456-residue chain is Probable serine/threonine-protein kinase DDB_G0277449 (456 aa).

Over residues 50–83 (STSPTECEESSSSTITTPSEESLSSGEESSSISD) the composition is skewed to low complexity. The interval 50-84 (STSPTECEESSSSTITTPSEESLSSGEESSSISDS) is disordered. The Protein kinase domain maps to 128 to 383 (FIIKHLVGKG…AIEIKRHPFF (256 aa)). Residues 134 to 142 (VGKGGFGKV) and K157 each bind ATP. The Proton acceptor role is filled by D251. The region spanning 384–455 (KSIQWRKIEN…VRTPVLLESQ (72 aa)) is the AGC-kinase C-terminal domain.

This sequence belongs to the protein kinase superfamily. AGC Ser/Thr protein kinase family.

It catalyses the reaction L-seryl-[protein] + ATP = O-phospho-L-seryl-[protein] + ADP + H(+). The catalysed reaction is L-threonyl-[protein] + ATP = O-phospho-L-threonyl-[protein] + ADP + H(+). This is Probable serine/threonine-protein kinase DDB_G0277449 from Dictyostelium discoideum (Social amoeba).